The chain runs to 37 residues: Fructose-bisphosphate aldolase A (37 aa).

This sequence belongs to the class I fructose-bisphosphate aldolase family. Tetramer.

It catalyses the reaction beta-D-fructose 1,6-bisphosphate = D-glyceraldehyde 3-phosphate + dihydroxyacetone phosphate. It participates in carbohydrate degradation; glycolysis; D-glyceraldehyde 3-phosphate and glycerone phosphate from D-glucose: step 4/4. Its function is as follows. Plays a key role in glycolysis and gluconeogenesis. This chain is Fructose-bisphosphate aldolase A, found in Thunnus albacares (Yellowfin tuna).